Consider the following 325-residue polypeptide: DNA-directed RNA polymerase subunit alpha (325 aa).

The alpha N-terminal domain (alpha-NTD) stretch occupies residues 1–231 (MQNSLLKPRI…DQLNVFAALE (231 aa)). The alpha C-terminal domain (alpha-CTD) stretch occupies residues 246–325 (VDPILLRPVD…ENWPPAGLEK (80 aa)).

It belongs to the RNA polymerase alpha chain family. As to quaternary structure, homodimer. The RNAP catalytic core consists of 2 alpha, 1 beta, 1 beta' and 1 omega subunit. When a sigma factor is associated with the core the holoenzyme is formed, which can initiate transcription.

The catalysed reaction is RNA(n) + a ribonucleoside 5'-triphosphate = RNA(n+1) + diphosphate. In terms of biological role, DNA-dependent RNA polymerase catalyzes the transcription of DNA into RNA using the four ribonucleoside triphosphates as substrates. This is DNA-directed RNA polymerase subunit alpha from Herminiimonas arsenicoxydans.